The primary structure comprises 633 residues: Putative oligopeptide transporter HI_0561 (633 aa).

15 helical membrane passes run 8–28, 45–65, 70–90, 128–148, 180–200, 230–250, 281–301, 311–331, 345–365, 379–399, 420–440, 483–503, 515–535, 564–584, and 604–624; these read GVTFASSIPAAVISMAVLKFF, SAGTLSSVIFVLPGLLMMGYW, FWQTMLICAAGGTLGVLFTIP, IAYGGVLAGLVAFLTNGLRVM, IGIVGGIAMLIGVILTWGVAV, IGVGTIGIAAIWTLLILMKPM, MIYILIATVALIVISLHHFIA, ILLVVVCTFLAVFIGFFVAAA, PISGIGIISVIVISLVLVSIG, FLTALTLFTASIVITTACISN, VALIIGCFVGALVIAPVLEIL, WTYILTGVGLGAVLITIDAFL, VIAVGIGIYLPPSINTPVIVG, LFSAGLIVGESLMGVILAFII, and WDTIGEWFGLIVFIVGIVIFA.

Belongs to the oligopeptide OPT transporter family.

Its subcellular location is the cell membrane. This chain is Putative oligopeptide transporter HI_0561, found in Haemophilus influenzae (strain ATCC 51907 / DSM 11121 / KW20 / Rd).